We begin with the raw amino-acid sequence, 106 residues long: Small ribosomal subunit protein uS10 (106 aa).

The protein belongs to the universal ribosomal protein uS10 family. In terms of assembly, part of the 30S ribosomal subunit.

In terms of biological role, involved in the binding of tRNA to the ribosomes. This Hyphomonas neptunium (strain ATCC 15444) protein is Small ribosomal subunit protein uS10.